We begin with the raw amino-acid sequence, 504 residues long: MKLLELIEKWAIETPDQTAFVWRDAKITYKQLKEDSDALAHWISSAYPDDRSPIMVYGHMQPEMIINFLGCVKAGHAYIPVDLSIPADRVQRIAENSGAKLLLSAAAVTVTDLPVRIVSEDNLKDIFFTHKGNTPNPEHAVKGDENFYIIYTSGSTGNPKGVQITYNCLVSFTKWAVEDFNLQTGQVFLNQAPFSFDLSVMDIYPSLVTGGTLWAIDKDMIARPKDLFASLEQSDIQVWTSTPSFAEMCLMEASFSESMLPNMKTFLFCGEVLPNEVARKLIERFPNATIMNTYGPTEATVAVTGIHVTEEVLDQYKSLPVGYCKSDCRLLIMKEDGTIAPDGEKGEIVIVGPSVSVGYLGSPELTEKAFTMIDGERAYKTGDAGYVENGLLFYNGRLDFQIKLHGYRMELEEIEHHLRACSYVEGAVIVPIKKGEKYDYLLAVVVPGEHSFEKEFKLTSAIKKELNERLPNYMIPRKFMYQSSIPMTPNGKVDRKKLLSEVTA.

152-153 (TS) lines the ATP pocket. Asp197 is a D-alanine binding site. 292 to 297 (NTYGPT) lines the ATP pocket. A D-alanine-binding site is contributed by Val301. ATP contacts are provided by residues Asp383, 394 to 397 (YNGR), and Lys492. Lys492 lines the D-alanine pocket.

It belongs to the ATP-dependent AMP-binding enzyme family. DltA subfamily.

The protein resides in the cytoplasm. It carries out the reaction holo-[D-alanyl-carrier protein] + D-alanine + ATP = D-alanyl-[D-alanyl-carrier protein] + AMP + diphosphate. Its pathway is cell wall biogenesis; lipoteichoic acid biosynthesis. In terms of biological role, catalyzes the first step in the D-alanylation of lipoteichoic acid (LTA), the activation of D-alanine and its transfer onto the D-alanyl carrier protein (Dcp) DltC. In an ATP-dependent two-step reaction, forms a high energy D-alanyl-AMP intermediate, followed by transfer of the D-alanyl residue as a thiol ester to the phosphopantheinyl prosthetic group of the Dcp. D-alanylation of LTA plays an important role in modulating the properties of the cell wall in Gram-positive bacteria, influencing the net charge of the cell wall. The chain is D-alanine--D-alanyl carrier protein ligase from Bacillus cereus (strain G9842).